The following is a 195-amino-acid chain: Probable molybdenum cofactor guanylyltransferase (195 aa).

Residues Leu6–Gly8, Lys18, Asp67, and Asp93 each bind GTP. Residue Asp93 coordinates Mg(2+).

It belongs to the MobA family. Requires Mg(2+) as cofactor.

It localises to the cytoplasm. The enzyme catalyses Mo-molybdopterin + GTP + H(+) = Mo-molybdopterin guanine dinucleotide + diphosphate. Transfers a GMP moiety from GTP to Mo-molybdopterin (Mo-MPT) cofactor (Moco or molybdenum cofactor) to form Mo-molybdopterin guanine dinucleotide (Mo-MGD) cofactor. The polypeptide is Probable molybdenum cofactor guanylyltransferase (Thermococcus sibiricus (strain DSM 12597 / MM 739)).